Consider the following 814-residue polypeptide: Echinoderm microtubule-associated protein-like 1 (814 aa).

The stretch at 31–72 forms a coiled coil; sequence SMEISDRIASLEQRVQMQEDDIQLLKSALADVVRRLNITEEQ. Residues 77-185 form a disordered region; it reads NRKGPTKARP…EPTFSPEEGY (109 aa). The span at 92-101 shows a compositional bias: polar residues; sequence PLRTTVNNGT. Over residues 103 to 115 the composition is skewed to low complexity; it reads LPKKPSASLPSPS. Residue Ser-113 is modified to Phosphoserine. Over residues 127 to 137 the composition is skewed to polar residues; that stretch reads KSINRTSSSER. The span at 142-152 shows a compositional bias: basic and acidic residues; sequence GRRESSGDSKG. Positions 155–167 are enriched in low complexity; the sequence is NRTGSTSSSSSGK. The interval 175–814 is tandem atypical propeller in EMLs; that stretch reads KEPTFSPEEG…DTSIMQWRVI (640 aa). WD repeat units lie at residues 260 to 309, 314 to 357, 362 to 399, 408 to 445, 449 to 488, 492 to 529, 534 to 571, 577 to 612, 616 to 654, 663 to 700, 708 to 767, and 774 to 813; these read EQLQ…IWDS, TLHV…VWDW, RLAD…FWTL, QGLF…VWGK, RISY…SWNG, KLHK…LQGT, FTPI…LWDA, VWDK…VFDT, DLVT…IYGV, RVGK…YWVP, SVET…LFSY, and APSH…QWRV.

This sequence belongs to the WD repeat EMAP family. As to quaternary structure, homotrimer; self-association is mediated by the N-terminal coiled coil. Does not interact with EML3. Binds repolymerizing microtubules. Binds unpolymerized tubulins via its WD repeat region. Interacts with TASOR.

It is found in the cytoplasm. Its subcellular location is the perinuclear region. The protein localises to the cytoskeleton. Its function is as follows. Modulates the assembly and organization of the microtubule cytoskeleton, and probably plays a role in regulating the orientation of the mitotic spindle and the orientation of the plane of cell division. Required for normal proliferation of neuronal progenitor cells in the developing brain and for normal brain development. Does not affect neuron migration per se. This chain is Echinoderm microtubule-associated protein-like 1 (Eml1), found in Rattus norvegicus (Rat).